The sequence spans 580 residues: MKECPYGEKCYRKNPIHFGEFSHAHLDAIYAKGNESGDYEIPANYSSEMIHTQLKLLEKLFPKQATNKEQEAHSSSSKPAVTAPVASGSSSSGSLDTNPSGSSASGPAASQDTSNLAKKQKLNAKNIRDYIPVVIEKGGMAKKLERAAPYNMFLTAITDSKPTHSEPLSITLQEILDESLGEIESTVQINFMVDIGWLLGHYYFAGILDKPLLLLYGDESPELLSIGKFKQQVTAIRVKMPTPFATSHTKMMFLGYSDGSMRVVISTANLYEDDWHNRTQGLWISPKLPALPVDADTGAGESLTGFKQDLMLYLVEYKISQLQPWIARIRNSDFSAINVFFLGSVPGGHREGSVRGHPWGHARLASLLAKHAAPIDDRIPVVCQSSSIGSLGANVQAWIQQDFVNSLKKDSTPVGKLRQMPPFKMIYPSYGNVAGSHDGMLGGGCLPYGKNTNDKQPWLKDYLQQWKSSDRFRSRAMPHIKSYTRFNLEDQSVYWFVLTSANLSKAAWGCFNKNSNIQPCLRIANYEAGVLFLPRFVTGEDTFPLGNNRDGVPAFPLPYDVPLTPYAPDDKPFLMDYLQG.

Residues 65–117 (ATNKEQEAHSSSSKPAVTAPVASGSSSSGSLDTNPSGSSASGPAASQDTSNLA) form a disordered region. Over residues 87 to 110 (SGSSSSGSLDTNPSGSSASGPAAS) the composition is skewed to low complexity. His-248 serves as the catalytic Nucleophile. Lys-250 is a substrate binding site. The tract at residues 387–390 (SIGS) is interaction with DNA. The active-site Proton donor/acceptor is the His-479. Position 481 (Lys-481) interacts with substrate.

This sequence belongs to the tyrosyl-DNA phosphodiesterase family. As to expression, expressed in the body and at higher levels in the head. Expressed in the delaminating neuroblasts and a few ganglion mother cells in stage 11-14 embryonic central nervous system. Weak expression is seen in gonads at stage 16. Expressed in the brain; expression is regulated by DIP2.

The protein resides in the nucleus. The protein localises to the cytoplasm. Its function is as follows. DNA repair enzyme that can remove a variety of covalent adducts from DNA through hydrolysis of a 3'-phosphodiester bond, giving rise to DNA with a free 3' phosphate. Catalyzes the hydrolysis of dead-end complexes between DNA and the topoisomerase I active site tyrosine residue. Hydrolyzes 3'-phosphoglycolates on protruding 3' ends on DNA double-strand breaks due to DNA damage by radiation and free radicals. Acts on blunt-ended double-strand DNA breaks and on single-stranded DNA. May have low 3'exonuclease activity and may be able to remove a single nucleoside from the 3'end of DNA and RNA molecules with 3'hydroxyl groups. Has no exonuclease activity towards DNA or RNA with a 3'phosphate. Required for normal polarization of epidermal cells, correct subcellular location of the Crb complex to the apical lateral membrane, and for normal neuronal development during embryonic development. Contributes to maintenance of epithelial cells in response to topoisomerase-1-mediated and oxidative DNA damage. Required for precise axonal bifurcation in mushroom body neurons. Required for maintenance of normal neuronal function. This is Tyrosyl-DNA phosphodiesterase 1 from Drosophila melanogaster (Fruit fly).